Here is a 455-residue protein sequence, read N- to C-terminus: Ribulose bisphosphate carboxylase large chain (455 aa).

N6,N6,N6-trimethyllysine is present on Lys-5. 2 residues coordinate substrate: Asn-114 and Thr-164. Catalysis depends on Lys-166, which acts as the Proton acceptor. A substrate-binding site is contributed by Lys-168. Positions 192, 194, and 195 each coordinate Mg(2+). Lys-192 is modified (N6-carboxylysine). Catalysis depends on His-285, which acts as the Proton acceptor. Substrate-binding residues include Arg-286, His-318, and Ser-370.

It belongs to the RuBisCO large chain family. Type I subfamily. In terms of assembly, heterohexadecamer of 8 large chains and 8 small chains; disulfide-linked. The disulfide link is formed within the large subunit homodimers. The cofactor is Mg(2+). The disulfide bond which can form in the large chain dimeric partners within the hexadecamer appears to be associated with oxidative stress and protein turnover.

It is found in the plastid. The protein resides in the chloroplast. The catalysed reaction is 2 (2R)-3-phosphoglycerate + 2 H(+) = D-ribulose 1,5-bisphosphate + CO2 + H2O. It catalyses the reaction D-ribulose 1,5-bisphosphate + O2 = 2-phosphoglycolate + (2R)-3-phosphoglycerate + 2 H(+). Its function is as follows. RuBisCO catalyzes two reactions: the carboxylation of D-ribulose 1,5-bisphosphate, the primary event in carbon dioxide fixation, as well as the oxidative fragmentation of the pentose substrate in the photorespiration process. Both reactions occur simultaneously and in competition at the same active site. The chain is Ribulose bisphosphate carboxylase large chain from Lupinus luteus (European yellow lupine).